A 370-amino-acid chain; its full sequence is Chaperone protein DnaJ (370 aa).

The J domain occupies 6-70; it reads DFYEILGVSK…QKRANYDQFG (65 aa). The CR-type zinc-finger motif lies at 134 to 216; sequence GANKSVTLNV…CHGKGFNTKR (83 aa). Cys147, Cys150, Cys164, Cys167, Cys190, Cys193, Cys204, and Cys207 together coordinate Zn(2+). 4 CXXCXGXG motif repeats span residues 147–154, 164–171, 190–197, and 204–211; these read CTSCHGSG, CSRCGGTG, CPDCGGSG, and CGECHGKG.

It belongs to the DnaJ family. As to quaternary structure, homodimer. Zn(2+) is required as a cofactor.

Its subcellular location is the cytoplasm. In terms of biological role, participates actively in the response to hyperosmotic and heat shock by preventing the aggregation of stress-denatured proteins and by disaggregating proteins, also in an autonomous, DnaK-independent fashion. Unfolded proteins bind initially to DnaJ; upon interaction with the DnaJ-bound protein, DnaK hydrolyzes its bound ATP, resulting in the formation of a stable complex. GrpE releases ADP from DnaK; ATP binding to DnaK triggers the release of the substrate protein, thus completing the reaction cycle. Several rounds of ATP-dependent interactions between DnaJ, DnaK and GrpE are required for fully efficient folding. Also involved, together with DnaK and GrpE, in the DNA replication of plasmids through activation of initiation proteins. In Erysipelothrix rhusiopathiae, this protein is Chaperone protein DnaJ.